A 71-amino-acid chain; its full sequence is Natterin-P (71 aa).

The first 18 residues, 1–18, serve as a signal peptide directing secretion; sequence MKLLVLLVTLLVLSWTSA. The propeptide occupies 19–45; sequence EDLGDQEILENNEDNNHESELGEPAAQ. Residues 22–31 are compositionally biased toward acidic residues; the sequence is GDQEILENNE. The segment at 22–54 is disordered; the sequence is GDQEILENNEDNNHESELGEPAAQHTDDETSQL. C62 and C71 are oxidised to a cystine.

The protein belongs to the natterin family. Expressed by the venom gland.

It localises to the secreted. Its activity is regulated as follows. Inhibited by tissue-kallikrein inhibitor TKI and trasylol. Plasma kallikrein inhibitor PKSI527 and classical inhibitors of serine-, metallo-, thiol- or aspartate-peptidases evokes a minor inhibition of the peptide digestion. Its function is as follows. Shows nociceptive, edema-inducing and kininogenase activity with release of kallidin from low molecular weight kininogen. The cleavage occurs at Met-Lys bonds. The sequence is that of Natterin-P from Thalassophryne nattereri (Copper Joe toadfish).